The sequence spans 170 residues: Large ribosomal subunit protein bL9 (170 aa).

A disordered region spans residues 149–170 (DGDNEDLDEDNAADENEDYSEE).

The protein belongs to the bacterial ribosomal protein bL9 family.

In terms of biological role, binds to the 23S rRNA. The sequence is that of Large ribosomal subunit protein bL9 from Psychrobacter cryohalolentis (strain ATCC BAA-1226 / DSM 17306 / VKM B-2378 / K5).